We begin with the raw amino-acid sequence, 443 residues long: Xaa-Pro dipeptidase (443 aa).

5 residues coordinate Mn(2+): Asp244, Asp255, His336, Glu381, and Glu420.

Belongs to the peptidase M24B family. Bacterial-type prolidase subfamily. Requires Mn(2+) as cofactor.

It catalyses the reaction Xaa-L-Pro dipeptide + H2O = an L-alpha-amino acid + L-proline. In terms of biological role, splits dipeptides with a prolyl residue in the C-terminal position. The chain is Xaa-Pro dipeptidase from Stenotrophomonas maltophilia (strain K279a).